The primary structure comprises 130 residues: Small ribosomal subunit protein uS8 (130 aa).

The protein belongs to the universal ribosomal protein uS8 family. As to quaternary structure, part of the 30S ribosomal subunit. Contacts proteins S5 and S12.

In terms of biological role, one of the primary rRNA binding proteins, it binds directly to 16S rRNA central domain where it helps coordinate assembly of the platform of the 30S subunit. The polypeptide is Small ribosomal subunit protein uS8 (Nitrosococcus oceani (strain ATCC 19707 / BCRC 17464 / JCM 30415 / NCIMB 11848 / C-107)).